The primary structure comprises 128 residues: Histone H2A (128 aa).

This sequence belongs to the histone H2A family. As to quaternary structure, the nucleosome is a histone octamer containing two molecules each of H2A, H2B, H3 and H4 assembled in one H3-H4 heterotetramer and two H2A-H2B heterodimers. The octamer wraps approximately 147 bp of DNA.

The protein localises to the nucleus. It localises to the chromosome. Its function is as follows. Core component of nucleosome. Nucleosomes wrap and compact DNA into chromatin, limiting DNA accessibility to the cellular machineries which require DNA as a template. Histones thereby play a central role in transcription regulation, DNA repair, DNA replication and chromosomal stability. DNA accessibility is regulated via a complex set of post-translational modifications of histones, also called histone code, and nucleosome remodeling. This is Histone H2A (HTA1) from Encephalitozoon cuniculi (strain GB-M1) (Microsporidian parasite).